The chain runs to 255 residues: Trypsin alpha-4 (255 aa).

A signal peptide spans Met1–Gly16. A propeptide spans Ala17–Arg30 (activation peptide). The Peptidase S1 domain maps to Ile31–Ser253. Cys56 and Cys72 are joined by a disulfide. Catalysis depends on charge relay system residues His71 and Asp116. Cystine bridges form between Cys179–Cys196 and Cys205–Cys229. Catalysis depends on Ser209, which acts as the Charge relay system.

The protein belongs to the peptidase S1 family.

It localises to the secreted. The protein localises to the extracellular space. The enzyme catalyses Preferential cleavage: Arg-|-Xaa, Lys-|-Xaa.. This Lucilia cuprina (Green bottle fly) protein is Trypsin alpha-4.